Here is a 357-residue protein sequence, read N- to C-terminus: Thymidine kinase (357 aa).

ATP is bound at residue 17–24 (GAHGLGKT). Glu-45 acts as the Proton acceptor in catalysis. ATP is bound at residue Arg-186. Arg-192 serves as a coordination point for substrate.

Belongs to the herpesviridae thymidine kinase family. As to quaternary structure, homodimer.

The catalysed reaction is thymidine + ATP = dTMP + ADP + H(+). Functionally, catalyzes the transfer of the gamma-phospho group of ATP to thymidine to generate dTMP in the salvage pathway of pyrimidine synthesis. The dTMP serves as a substrate for DNA polymerase during viral DNA replication. Allows the virus to be reactivated and to grow in non-proliferative cells lacking a high concentration of phosphorylated nucleic acid precursors. The protein is Thymidine kinase of Bovine herpesvirus 1 (strain 6660) (BoHV-1).